A 545-amino-acid polypeptide reads, in one-letter code: Cryptochrome-1 (545 aa).

The Photolyase/cryptochrome alpha/beta domain occupies 3–140; sequence INNILWFRHG…RCVENVSHTL (138 aa). Residues Arg237, Ser265, Ser267, Gln308, His375, 407-409, Cys413, and Asn416 contribute to the FAD site; that span reads DAD.

The protein belongs to the DNA photolyase class-1 family. In terms of assembly, interacts with tim and per; promoted by light conditions. FAD serves as cofactor.

It is found in the cytoplasm. The protein resides in the perinuclear region. Its subcellular location is the nucleus. Functionally, blue light-dependent regulator that is the input of the circadian feedback loop. Has no photolyase activity for cyclobutane pyrimidine dimers or 6-4 photoproducts. Regulation of expression by light suggests a role in photoreception for locomotor activity rhythms. Functions, together with per, as a transcriptional repressor required for the oscillation of peripheral circadian clocks and for the correct specification of clock cells. Genes directly activated by the transcription factors Clock (Clk) and cycle (cyc) are repressed by cry. This is Cryptochrome-1 from Anopheles gambiae (African malaria mosquito).